The primary structure comprises 208 residues: Ribosomal RNA small subunit methyltransferase G (208 aa).

S-adenosyl-L-methionine-binding positions include glycine 76, leucine 81, 127-128, and arginine 142; that span reads VE.

Belongs to the methyltransferase superfamily. RNA methyltransferase RsmG family.

It localises to the cytoplasm. It carries out the reaction guanosine(527) in 16S rRNA + S-adenosyl-L-methionine = N(7)-methylguanosine(527) in 16S rRNA + S-adenosyl-L-homocysteine. In terms of biological role, specifically methylates the N7 position of guanine in position 527 of 16S rRNA. This chain is Ribosomal RNA small subunit methyltransferase G, found in Legionella pneumophila (strain Lens).